The primary structure comprises 221 residues: Oligoribonuclease (221 aa).

In terms of domain architecture, Exonuclease spans 21–186 (LVWVDLEMTG…ADIVESIREL (166 aa)). Residue Tyr-143 is part of the active site.

Belongs to the oligoribonuclease family.

The protein resides in the cytoplasm. In terms of biological role, 3'-to-5' exoribonuclease specific for small oligoribonucleotides. The polypeptide is Oligoribonuclease (Corynebacterium efficiens (strain DSM 44549 / YS-314 / AJ 12310 / JCM 11189 / NBRC 100395)).